We begin with the raw amino-acid sequence, 266 residues long: Metallo-beta-lactamase VIM-2 (266 aa).

Positions 1–20 (MFKLLSKLLVYLTASIMAIA) are cleaved as a signal peptide. Zn(2+) is bound by residues H114, H116, and C198.

Belongs to the metallo-beta-lactamase superfamily. Class-B beta-lactamase family. Monomer. Requires Zn(2+) as cofactor.

It localises to the periplasm. It carries out the reaction a beta-lactam + H2O = a substituted beta-amino acid. With respect to regulation, inhibited by chelating agents such as EDTA. Inhibited by a fungal natural product, aspergillomarasmine A (AMA). Inhibited by 2-triazolylthioacetamides. In terms of biological role, class B beta-lactamase which confers resistance to the beta-lactam antibiotics, including penicillins, cephalosporins and carbapenems. Acts via hydrolysis of the beta-lactam ring. Has penicillin-, cephalosporin- and carbapenem-hydrolyzing activities. The chain is Metallo-beta-lactamase VIM-2 from Escherichia coli.